A 157-amino-acid polypeptide reads, in one-letter code: Transcription elongation factor GreA (157 aa).

Residues 46–67 (AEYHAARERQSFIEGRIKELED) adopt a coiled-coil conformation.

Belongs to the GreA/GreB family.

Necessary for efficient RNA polymerase transcription elongation past template-encoded arresting sites. The arresting sites in DNA have the property of trapping a certain fraction of elongating RNA polymerases that pass through, resulting in locked ternary complexes. Cleavage of the nascent transcript by cleavage factors such as GreA or GreB allows the resumption of elongation from the new 3'terminus. GreA releases sequences of 2 to 3 nucleotides. The chain is Transcription elongation factor GreA from Rhodospirillum rubrum (strain ATCC 11170 / ATH 1.1.1 / DSM 467 / LMG 4362 / NCIMB 8255 / S1).